Consider the following 195-residue polypeptide: Putative NADH dehydrogenase/NAD(P)H nitroreductase Caul_0018 (195 aa).

Belongs to the nitroreductase family. HadB/RutE subfamily. It depends on FMN as a cofactor.

In Caulobacter sp. (strain K31), this protein is Putative NADH dehydrogenase/NAD(P)H nitroreductase Caul_0018.